A 145-amino-acid polypeptide reads, in one-letter code: 3-hydroxyacyl-[acyl-carrier-protein] dehydratase FabZ (145 aa).

The active site involves histidine 52.

It belongs to the thioester dehydratase family. FabZ subfamily.

It localises to the cytoplasm. It catalyses the reaction a (3R)-hydroxyacyl-[ACP] = a (2E)-enoyl-[ACP] + H2O. In terms of biological role, involved in unsaturated fatty acids biosynthesis. Catalyzes the dehydration of short chain beta-hydroxyacyl-ACPs and long chain saturated and unsaturated beta-hydroxyacyl-ACPs. The protein is 3-hydroxyacyl-[acyl-carrier-protein] dehydratase FabZ of Deinococcus radiodurans (strain ATCC 13939 / DSM 20539 / JCM 16871 / CCUG 27074 / LMG 4051 / NBRC 15346 / NCIMB 9279 / VKM B-1422 / R1).